A 321-amino-acid polypeptide reads, in one-letter code: uncharacterized protein (321 aa).

The 185-residue stretch at 130–314 (NLVYDLETTG…NDVDALIKIM (185 aa)) folds into the Exonuclease domain.

This is an uncharacterized protein from Acanthamoeba polyphaga (Amoeba).